Here is a 359-residue protein sequence, read N- to C-terminus: UPF0284 protein MAE_56900 (359 aa).

Belongs to the UPF0284 family.

This chain is UPF0284 protein MAE_56900, found in Microcystis aeruginosa (strain NIES-843 / IAM M-2473).